A 232-amino-acid chain; its full sequence is Peptidyl-prolyl cis-trans isomerase CYP26-1 (232 aa).

The 160-residue stretch at 7–166 (FFDLTVDGKP…KPVVIADCGE (160 aa)) folds into the PPIase cyclophilin-type domain. An N-linked (GlcNAc...) asparagine glycan is attached at Asn-108. Residues 212-232 (YYLINIVVACMVLMCFWSWFV) traverse the membrane as a helical segment.

The protein belongs to the cyclophilin-type PPIase family. Expressed only in flowers.

It localises to the membrane. The enzyme catalyses [protein]-peptidylproline (omega=180) = [protein]-peptidylproline (omega=0). In terms of biological role, PPIases accelerate the folding of proteins. It catalyzes the cis-trans isomerization of proline imidic peptide bonds in oligopeptides. This Arabidopsis thaliana (Mouse-ear cress) protein is Peptidyl-prolyl cis-trans isomerase CYP26-1 (CYP26-1).